The following is a 324-amino-acid chain: Pancreas transcription factor 1 subunit alpha (324 aa).

In terms of domain architecture, bHLH spans 160 to 212 (QLRQAANVRERRRMQSINDAFEGLRSHIPTLPYEKRLSKVDTLRLAIGYINFL). The segment at 302 to 324 (DPRKLNSKSFDNIENEPPFEFVS) is disordered.

In terms of assembly, component of the pancreas transcription factor 1 complex (PTF1) which is composed of TCF3/p75, TCF12/p64 and PTF1A/p48. TCF3 is responsible for the nuclear import of the p48/p64 complex. Interacts with TCF3 and RBPSUH/RBP-Jkappa. Expressed in precursors of pancreatic islets, acini and ducts.

Its subcellular location is the nucleus. The protein resides in the cytoplasm. Transcription factor implicated in the cell fate determination in various organs. Binds to the E-box consensus sequence 5'-CANNTG-3'. Plays a role in early and late pancreas development and differentiation. Important for determining whether cells allocated to the pancreatic buds continue towards pancreatic organogenesis or revert back to duodenal fates. May be involved in the maintenance of exocrine pancreas-specific gene expression including ELA1 and amylase. Required for the formation of pancreatic acinar and ductal cells. Plays an important role in cerebellar development. Directly regulated by FOXN4 and RORC during retinal development, FOXN4-PTF1A pathway plays a central role in directing the differentiation of retinal progenitors towards horizontal and amacrine fates. In Mus musculus (Mouse), this protein is Pancreas transcription factor 1 subunit alpha (Ptf1a).